The chain runs to 269 residues: MQIYLDLLRRILDEGVRREDRTGTGTVSVFGHQMVFDLREGFPLVTTKKIYTRSVFGELLWFLRGDTNVGWLHDNNIHIWDEWADENGDLGPVYGHQWRSWPDDDGTIDQIANVVEQIRTNPWSRRHIVSAWNVAEIKEMALPPCHTLFQFYVTPDDRGTPTWLSCQLYQRSGDTFLGVPFNIASYALLTHLVASVTGLKPLRFVHTLGDAHVYLNHLDQVHEQLKRKPRHRPTLTVNPGIRDIDGFELSDITLTGYDPYPALPAPIAV.

DUMP is bound by residues R21 and 125–126 (RR). The active-site Nucleophile is C145. DUMP-binding positions include 171–174 (RSGD), N182, and 212–214 (HVY). D174 is a binding site for (6R)-5,10-methylene-5,6,7,8-tetrahydrofolate. A268 provides a ligand contact to (6R)-5,10-methylene-5,6,7,8-tetrahydrofolate.

It belongs to the thymidylate synthase family. Bacterial-type ThyA subfamily. In terms of assembly, homodimer.

The protein localises to the cytoplasm. It catalyses the reaction dUMP + (6R)-5,10-methylene-5,6,7,8-tetrahydrofolate = 7,8-dihydrofolate + dTMP. It functions in the pathway pyrimidine metabolism; dTTP biosynthesis. Its function is as follows. Catalyzes the reductive methylation of 2'-deoxyuridine-5'-monophosphate (dUMP) to 2'-deoxythymidine-5'-monophosphate (dTMP) while utilizing 5,10-methylenetetrahydrofolate (mTHF) as the methyl donor and reductant in the reaction, yielding dihydrofolate (DHF) as a by-product. This enzymatic reaction provides an intracellular de novo source of dTMP, an essential precursor for DNA biosynthesis. The polypeptide is Thymidylate synthase (Cutibacterium acnes (strain DSM 16379 / KPA171202) (Propionibacterium acnes)).